The sequence spans 96 residues: Co-chaperonin GroES (96 aa).

It belongs to the GroES chaperonin family. In terms of assembly, heptamer of 7 subunits arranged in a ring. Interacts with the chaperonin GroEL.

It localises to the cytoplasm. Together with the chaperonin GroEL, plays an essential role in assisting protein folding. The GroEL-GroES system forms a nano-cage that allows encapsulation of the non-native substrate proteins and provides a physical environment optimized to promote and accelerate protein folding. GroES binds to the apical surface of the GroEL ring, thereby capping the opening of the GroEL channel. The chain is Co-chaperonin GroES from Photobacterium profundum (strain SS9).